A 201-amino-acid polypeptide reads, in one-letter code: Recombination protein RecR (201 aa).

Residues 57-72 (CADCRTFTEQDVCNIC) form a C4-type zinc finger. In terms of domain architecture, Toprim spans 81 to 176 (GQICVVESPA…EASRIAHGVP (96 aa)).

The protein belongs to the RecR family.

Its function is as follows. May play a role in DNA repair. It seems to be involved in an RecBC-independent recombinational process of DNA repair. It may act with RecF and RecO. The chain is Recombination protein RecR from Salmonella choleraesuis (strain SC-B67).